The primary structure comprises 493 residues: Glutamyl-tRNA(Gln) amidotransferase subunit A (493 aa).

Active-site charge relay system residues include lysine 79 and serine 159. The Acyl-ester intermediate role is filled by serine 183.

Belongs to the amidase family. GatA subfamily. As to quaternary structure, heterotrimer of A, B and C subunits.

The enzyme catalyses L-glutamyl-tRNA(Gln) + L-glutamine + ATP + H2O = L-glutaminyl-tRNA(Gln) + L-glutamate + ADP + phosphate + H(+). Allows the formation of correctly charged Gln-tRNA(Gln) through the transamidation of misacylated Glu-tRNA(Gln) in organisms which lack glutaminyl-tRNA synthetase. The reaction takes place in the presence of glutamine and ATP through an activated gamma-phospho-Glu-tRNA(Gln). This Rhizobium etli (strain ATCC 51251 / DSM 11541 / JCM 21823 / NBRC 15573 / CFN 42) protein is Glutamyl-tRNA(Gln) amidotransferase subunit A.